A 122-amino-acid chain; its full sequence is Large ribosomal subunit protein uL14 (122 aa).

Belongs to the universal ribosomal protein uL14 family. Part of the 50S ribosomal subunit. Forms a cluster with proteins L3 and L19. In the 70S ribosome, L14 and L19 interact and together make contacts with the 16S rRNA in bridges B5 and B8.

Its function is as follows. Binds to 23S rRNA. Forms part of two intersubunit bridges in the 70S ribosome. This chain is Large ribosomal subunit protein uL14, found in Agrobacterium fabrum (strain C58 / ATCC 33970) (Agrobacterium tumefaciens (strain C58)).